The sequence spans 613 residues: DNA mismatch repair protein MutL (613 aa).

It belongs to the DNA mismatch repair MutL/HexB family.

In terms of biological role, this protein is involved in the repair of mismatches in DNA. It is required for dam-dependent methyl-directed DNA mismatch repair. May act as a 'molecular matchmaker', a protein that promotes the formation of a stable complex between two or more DNA-binding proteins in an ATP-dependent manner without itself being part of a final effector complex. The polypeptide is DNA mismatch repair protein MutL (Janthinobacterium sp. (strain Marseille) (Minibacterium massiliensis)).